The sequence spans 66 residues: Conotoxin Bu1.4 (66 aa).

A signal peptide spans 1–23 (MGMRMRMMFTVFLLVVLANTVVS). Residues 24–46 (FPSDRDSDGADAEASDEPVEFER) constitute a propeptide that is removed on maturation. Positions 25-48 (PSDRDSDGADAEASDEPVEFERDE) are disordered. Acidic residues predominate over residues 32–42 (GADAEASDEPV). Intrachain disulfides connect C51–C57 and C52–C62. T63 is modified (threonine amide).

This sequence belongs to the conotoxin A superfamily. As to expression, expressed by the venom duct.

It localises to the secreted. The sequence is that of Conotoxin Bu1.4 from Conus bullatus (Bubble cone).